The primary structure comprises 263 residues: Insulin-like growth factor-binding protein 1 (263 aa).

Positions 1-25 are cleaved as a signal peptide; the sequence is MPEVLAVRAWPLLLSLAVQLGATVG. The region spanning 28–109 is the IGFBP N-terminal domain; it reads QPWRCAPCSA…TRGQGACMTT (82 aa). 6 cysteine pairs are disulfide-bonded: Cys32–Cys59, Cys35–Cys61, Cys43–Cys62, Cys50–Cys65, Cys73–Cys86, and Cys80–Cys106. A disordered region spans residues 102–131; it reads GQGACMTTPSDEATDTKDTTSPENVSPESS. A phosphoserine mark is found at Ser122, Ser127, Ser130, Ser148, and Ser160. The span at 122–131 shows a compositional bias: polar residues; sequence SPENVSPESS. Position 162 is a phosphotyrosine (Tyr162). In terms of domain architecture, Thyroglobulin type-1 spans 177-255; that stretch reads KEPCQRELYK…SVAVRGDPKC (79 aa). 3 disulfide bridges follow: Cys180–Cys210, Cys221–Cys232, and Cys234–Cys255. Ser246 carries the phosphoserine modification. The short motif at 250 to 252 is the Cell attachment site element; the sequence is RGD.

As to quaternary structure, binds equally well IGF1 and IGF2. Interacts with integrin ITGA5:ITGB1. Interacts with VHL; this interaction inhibits HIF1A degradation.

The protein resides in the secreted. In terms of biological role, multifunctional protein that plays a critical role in regulating the availability of IGFs such as IGF1 and IGF2 to their receptors and thereby regulates IGF-mediated cellular processes including cell migration, proliferation, differentiation or apoptosis in a cell-type specific manner. Also plays a positive role in cell migration by interacting with integrin ITGA5:ITGB1 through its RGD motif. Mechanistically, binding to integrins leads to activation of focal adhesion kinase/PTK2 and stimulation of the mitogen-activated protein kinase (MAPK) pathway. Regulates cardiomyocyte apoptosis by suppressing HIF-1alpha/HIF1A degradation through ubiquitination. The polypeptide is Insulin-like growth factor-binding protein 1 (IGFBP1) (Bos taurus (Bovine)).